Reading from the N-terminus, the 173-residue chain is Thiol-disulfide oxidoreductase ResA (173 aa).

A helical; Signal-anchor for type II membrane protein membrane pass occupies residues 10-29; sequence VIILLILSGAVGFTLYQGYF. The Thioredoxin domain occupies 35 to 173; sequence MEIGKEAPNF…LEEYLKKITP (139 aa). An intrachain disulfide couples Cys-73 to Cys-76.

This sequence belongs to the thioredoxin family. ResA subfamily.

The protein resides in the cell membrane. Its pathway is protein modification; cytochrome c assembly. Thiol-disulfide oxidoreductase which is required in disulfide reduction during c-type cytochrome synthesis. May accept reducing equivalents from CcdA, leading to breakage of disulfide bonds in apocytochrome c; following this reduction heme can be covalently attached. The polypeptide is Thiol-disulfide oxidoreductase ResA (Bacillus cereus (strain ATCC 10987 / NRS 248)).